Here is a 147-residue protein sequence, read N- to C-terminus: Large ribosomal subunit protein uL11 (147 aa).

It belongs to the universal ribosomal protein uL11 family. In terms of assembly, part of the ribosomal stalk of the 50S ribosomal subunit. Interacts with L10 and the large rRNA to form the base of the stalk. L10 forms an elongated spine to which L12 dimers bind in a sequential fashion forming a multimeric L10(L12)X complex. Post-translationally, one or more lysine residues are methylated.

Its function is as follows. Forms part of the ribosomal stalk which helps the ribosome interact with GTP-bound translation factors. The chain is Large ribosomal subunit protein uL11 from Cytophaga hutchinsonii (strain ATCC 33406 / DSM 1761 / CIP 103989 / NBRC 15051 / NCIMB 9469 / D465).